The sequence spans 287 residues: RxLR effector protein Avr4 (287 aa).

The signal sequence occupies residues M1–A24. Positions R42–R55 match the RxLR-dEER motif. The segment at K115–R138 is W1 motif. The interval Q148–F171 is W2 motif. The segment at L221–K244 is W3 motif. A y motif region spans residues A246–D267.

This sequence belongs to the RxLR effector family.

Its subcellular location is the secreted. It is found in the host cytoplasm. The protein resides in the host nucleus. It localises to the host nucleolus. The protein localises to the host cytoskeleton. Functionally, secreted effector that acts as an elicitor of hypersensitive response (HR) specifically on plants carrying defense protein R4, through its interaction with this protein. This Phytophthora infestans (strain T30-4) (Potato late blight agent) protein is RxLR effector protein Avr4.